Reading from the N-terminus, the 706-residue chain is Polyribonucleotide nucleotidyltransferase (706 aa).

Positions 486 and 492 each coordinate Mg(2+). Positions 553-612 (PRIHTIKISTDKIKDVIGKGGSVIRALTEETGTTIEIEDDGTVRIASTDGEKAKHAIRRI) constitute a KH domain. The S1 motif domain maps to 622–690 (GRVYQGKVTR…RQGRVRLSIK (69 aa)).

It belongs to the polyribonucleotide nucleotidyltransferase family. Component of the RNA degradosome, which is a multiprotein complex involved in RNA processing and mRNA degradation. Mg(2+) serves as cofactor.

It localises to the cytoplasm. It catalyses the reaction RNA(n+1) + phosphate = RNA(n) + a ribonucleoside 5'-diphosphate. Its function is as follows. Involved in mRNA degradation. Catalyzes the phosphorolysis of single-stranded polyribonucleotides processively in the 3'- to 5'-direction. The polypeptide is Polyribonucleotide nucleotidyltransferase (Pectobacterium atrosepticum (strain SCRI 1043 / ATCC BAA-672) (Erwinia carotovora subsp. atroseptica)).